The primary structure comprises 321 residues: Probable arabinan endo-1,5-alpha-L-arabinosidase A (321 aa).

A signal peptide spans 1 to 19 (MSASVFVVVASCLAALAHG). The Proton acceptor role is filled by D34. E200 functions as the Proton donor in the catalytic mechanism.

The protein belongs to the glycosyl hydrolase 43 family.

The protein localises to the secreted. It catalyses the reaction Endohydrolysis of (1-&gt;5)-alpha-arabinofuranosidic linkages in (1-&gt;5)-arabinans.. It functions in the pathway glycan metabolism; L-arabinan degradation. Its function is as follows. Endo-1,5-alpha-L-arabinanase involved in degradation of pectin. Its preferred substrate is linear 1,5-alpha-L-arabinan. The protein is Probable arabinan endo-1,5-alpha-L-arabinosidase A (abnA) of Aspergillus fumigatus (strain ATCC MYA-4609 / CBS 101355 / FGSC A1100 / Af293) (Neosartorya fumigata).